Consider the following 61-residue polypeptide: Short neurotoxin 1 (61 aa).

4 disulfide bridges follow: C3–C23, C17–C40, C42–C53, and C54–C59.

This sequence belongs to the three-finger toxin family. Short-chain subfamily. Type I alpha-neurotoxin sub-subfamily. As to expression, expressed by the venom gland.

It localises to the secreted. In terms of biological role, binds to muscle nicotinic acetylcholine receptor (nAChR) and inhibit acetylcholine from binding to the receptor, thereby impairing neuromuscular transmission. Its function is as follows. Produces peripheral paralysis by blocking neuromuscular transmission at the postsynaptic site. Binds to the muscular nicotinic acetylcholine receptor. In Naja annulifera (Banded Egyptian cobra), this protein is Short neurotoxin 1.